The primary structure comprises 470 residues: Ribulose bisphosphate carboxylase large chain (470 aa).

At K5 the chain carries N6,N6,N6-trimethyllysine. N114 and T164 together coordinate substrate. K166 serves as the catalytic Proton acceptor. K168 lines the substrate pocket. Residues K192, D194, and E195 each contribute to the Mg(2+) site. Position 192 is an N6-carboxylysine (K192). H285 acts as the Proton acceptor in catalysis. Residues R286, H318, and S370 each contribute to the substrate site.

The protein belongs to the RuBisCO large chain family. Type I subfamily. In terms of assembly, heterohexadecamer of 8 large chains and 8 small chains; disulfide-linked. The disulfide link is formed within the large subunit homodimers. The cofactor is Mg(2+). The disulfide bond which can form in the large chain dimeric partners within the hexadecamer appears to be associated with oxidative stress and protein turnover.

It localises to the plastid. The protein resides in the chloroplast. The enzyme catalyses 2 (2R)-3-phosphoglycerate + 2 H(+) = D-ribulose 1,5-bisphosphate + CO2 + H2O. It carries out the reaction D-ribulose 1,5-bisphosphate + O2 = 2-phosphoglycolate + (2R)-3-phosphoglycerate + 2 H(+). Functionally, ruBisCO catalyzes two reactions: the carboxylation of D-ribulose 1,5-bisphosphate, the primary event in carbon dioxide fixation, as well as the oxidative fragmentation of the pentose substrate in the photorespiration process. Both reactions occur simultaneously and in competition at the same active site. The polypeptide is Ribulose bisphosphate carboxylase large chain (Bertiera breviflora).